Reading from the N-terminus, the 339-residue chain is Probable long-chain-alcohol O-fatty-acyltransferase 7 (339 aa).

7 helical membrane passes run 7–27 (SLIN…CLPP), 39–59 (IFPV…SIFT), 113–133 (HLST…LYVH), 143–163 (FLLC…LTLL), 226–246 (MLIG…VVFF), 254–274 (TGEV…EVAA), and 287–307 (PVVS…WLFF).

This sequence belongs to the wax synthase family.

It localises to the membrane. It catalyses the reaction a long chain fatty alcohol + a fatty acyl-CoA = a wax ester + CoA. Its function is as follows. Catalyzes the final step in the synthesis of long-chain linear esters (waxes). The polypeptide is Probable long-chain-alcohol O-fatty-acyltransferase 7 (AT7) (Arabidopsis thaliana (Mouse-ear cress)).